We begin with the raw amino-acid sequence, 436 residues long: Glutamyl-tRNA reductase (436 aa).

Substrate is bound by residues 52 to 55 (TCHR), Ser105, 110 to 112 (EDQ), and Gln116. Cys53 (nucleophile) is an active-site residue. Residue 184-189 (GAGEMG) coordinates NADP(+).

Belongs to the glutamyl-tRNA reductase family. As to quaternary structure, homodimer.

The catalysed reaction is (S)-4-amino-5-oxopentanoate + tRNA(Glu) + NADP(+) = L-glutamyl-tRNA(Glu) + NADPH + H(+). Its pathway is porphyrin-containing compound metabolism; protoporphyrin-IX biosynthesis; 5-aminolevulinate from L-glutamyl-tRNA(Glu): step 1/2. Functionally, catalyzes the NADPH-dependent reduction of glutamyl-tRNA(Glu) to glutamate 1-semialdehyde (GSA). The polypeptide is Glutamyl-tRNA reductase (Halobacterium salinarum (strain ATCC 29341 / DSM 671 / R1)).